A 956-amino-acid polypeptide reads, in one-letter code: RNA-binding protein 44 (956 aa).

The tract at residues 301–321 is disordered; the sequence is DNTQNNQNQSYNPTEENDHNV. The RRM domain maps to 750–824; the sequence is SLLCITCLPG…HAVQVVHLSG (75 aa). A disordered region spans residues 831 to 855; it reads KPSDLSHSASESHKEDTAGDELRTK. Over residues 840–854 the composition is skewed to basic and acidic residues; it reads SESHKEDTAGDELRT.

The protein resides in the cytoplasm. In terms of biological role, component of intercellular bridges during meiosis. Intercellular bridges are evolutionarily conserved structures that connect differentiating germ cells. Not required for fertility. This is RNA-binding protein 44 (rbm44) from Danio rerio (Zebrafish).